A 571-amino-acid polypeptide reads, in one-letter code: Urease subunit alpha (571 aa).

Residues 133-571 form the Urease domain; it reads GGIDTHIHFV…LPLAQRYFLF (439 aa). Residues His-138, His-140, and Lys-221 each coordinate Ni(2+). The residue at position 221 (Lys-221) is an N6-carboxylysine. His-223 provides a ligand contact to substrate. Ni(2+)-binding residues include His-250 and His-276. His-324 (proton donor) is an active-site residue. Asp-364 lines the Ni(2+) pocket.

It belongs to the metallo-dependent hydrolases superfamily. Urease alpha subunit family. In terms of assembly, heterotrimer of UreA (gamma), UreB (beta) and UreC (alpha) subunits. Three heterotrimers associate to form the active enzyme. It depends on Ni cation as a cofactor. Post-translationally, carboxylation allows a single lysine to coordinate two nickel ions.

The protein resides in the cytoplasm. It catalyses the reaction urea + 2 H2O + H(+) = hydrogencarbonate + 2 NH4(+). Its pathway is nitrogen metabolism; urea degradation; CO(2) and NH(3) from urea (urease route): step 1/1. In Anaeromyxobacter sp. (strain K), this protein is Urease subunit alpha.